Reading from the N-terminus, the 239-residue chain is Cysteine-rich venom protein ENH1 (239 aa).

A signal peptide spans 1–18; that stretch reads MIVFILLSLAAVLQQFVA. In terms of domain architecture, SCP spans 37 to 165; the sequence is VDMHNSFRRS…PYNYFYVCQY (129 aa). Cystine bridges form between Cys-74-Cys-152, Cys-91-Cys-166, Cys-147-Cys-163, Cys-185-Cys-192, Cys-188-Cys-197, Cys-210-Cys-228, and Cys-219-Cys-232. Residues 201-234 enclose the ShKT domain; it reads CPITNTFTNCDSLLQQNSCEDSYIKTNCGASCFC.

It belongs to the CRISP family. As to expression, expressed by the venom gland.

The protein localises to the secreted. Functionally, blocks contraction of smooth muscle elicited by high potassium-induced depolarization, but does not block caffeine-stimulated contraction. May target voltage-gated calcium channels on smooth muscle. This chain is Cysteine-rich venom protein ENH1, found in Pseudoferania polylepis (Macleay's water snake).